The primary structure comprises 259 residues: Ribosomal RNA small subunit methyltransferase J (259 aa).

S-adenosyl-L-methionine contacts are provided by residues 101-102 (RD), 117-118 (ER), 153-154 (SS), and Asp-176.

It belongs to the methyltransferase superfamily. RsmJ family.

The protein resides in the cytoplasm. It catalyses the reaction guanosine(1516) in 16S rRNA + S-adenosyl-L-methionine = N(2)-methylguanosine(1516) in 16S rRNA + S-adenosyl-L-homocysteine + H(+). In terms of biological role, specifically methylates the guanosine in position 1516 of 16S rRNA. The sequence is that of Ribosomal RNA small subunit methyltransferase J from Vibrio vulnificus (strain CMCP6).